The following is a 231-amino-acid chain: CD302 antigen (231 aa).

The signal sequence occupies residues 1 to 21 (MSAAVVATLPTLLLLLGLAAA). The Extracellular segment spans residues 22–169 (DCPSSSWVQF…YEKKYLPDHH (148 aa)). The 123-residue stretch at 31–153 (FQSNCYIFLQ…CEVSSVEGAL (123 aa)) folds into the C-type lectin domain. The N-linked (GlcNAc...) asparagine glycan is linked to N110. C129 and C144 are disulfide-bonded. The helical transmembrane segment at 170–190 (ILITALVIASTTILTITGAVV) threads the bilayer. The Cytoplasmic portion of the chain corresponds to 191–231 (WFLYKRNLTSGLTNTAYTTAPQLPYNDDCILVDAEENEYVA).

Its subcellular location is the membrane. The protein localises to the cell projection. The protein resides in the filopodium. It is found in the cytoplasm. It localises to the cell cortex. Its subcellular location is the microvillus. Its function is as follows. Potential multifunctional C-type lectin receptor that may play roles in endocytosis and phagocytosis as well as in cell adhesion and migration. The polypeptide is CD302 antigen (Trichosurus vulpecula (Brush-tailed possum)).